Here is a 381-residue protein sequence, read N- to C-terminus: tRNA N6-adenosine threonylcarbamoyltransferase (381 aa).

Residues histidine 114 and histidine 118 each coordinate Fe cation. Substrate is bound by residues 142–146, aspartate 178, glycine 191, aspartate 195, and asparagine 321; that span reads VVSGG. Aspartate 349 contributes to the Fe cation binding site.

The protein belongs to the KAE1 / TsaD family. Fe(2+) serves as cofactor.

Its subcellular location is the cytoplasm. The enzyme catalyses L-threonylcarbamoyladenylate + adenosine(37) in tRNA = N(6)-L-threonylcarbamoyladenosine(37) in tRNA + AMP + H(+). In terms of biological role, required for the formation of a threonylcarbamoyl group on adenosine at position 37 (t(6)A37) in tRNAs that read codons beginning with adenine. Is involved in the transfer of the threonylcarbamoyl moiety of threonylcarbamoyl-AMP (TC-AMP) to the N6 group of A37, together with TsaE and TsaB. TsaD likely plays a direct catalytic role in this reaction. The sequence is that of tRNA N6-adenosine threonylcarbamoyltransferase from Koribacter versatilis (strain Ellin345).